Consider the following 698-residue polypeptide: Elongation factor G (698 aa).

The tr-type G domain occupies 8–284; sequence ANVRNIGIMA…AVVDYLPSPL (277 aa). Residues 17 to 24, 81 to 85, and 135 to 138 each bind GTP; these read AHIDAGKT, DTPGH, and NKLD.

It belongs to the TRAFAC class translation factor GTPase superfamily. Classic translation factor GTPase family. EF-G/EF-2 subfamily.

It localises to the cytoplasm. In terms of biological role, catalyzes the GTP-dependent ribosomal translocation step during translation elongation. During this step, the ribosome changes from the pre-translocational (PRE) to the post-translocational (POST) state as the newly formed A-site-bound peptidyl-tRNA and P-site-bound deacylated tRNA move to the P and E sites, respectively. Catalyzes the coordinated movement of the two tRNA molecules, the mRNA and conformational changes in the ribosome. This Salinispora tropica (strain ATCC BAA-916 / DSM 44818 / JCM 13857 / NBRC 105044 / CNB-440) protein is Elongation factor G.